Here is a 246-residue protein sequence, read N- to C-terminus: Myelin protein P0 (246 aa).

Residues 1–27 (MFRDLKPAYLFCCSVLYAFSVLRPSQG) form the signal peptide. The 116-residue stretch at 28–143 (ISVSTHHNLH…VGTSSDVHLT (116 aa)) folds into the Ig-like V-type domain. The Extracellular portion of the chain corresponds to 28–150 (ISVSTHHNLH…HLTVYDKIPP (123 aa)). Cys48 and Cys125 form a disulfide bridge. An N-linked (GlcNAc...) (complex) asparagine glycan is attached at Asn120. A helical transmembrane segment spans residues 151–178 (VGAGVVSGAIIGTFLGIILLIVGGLYLF). At 179 to 246 (RYIVRRRARS…KLSESKRDKK (68 aa)) the chain is on the cytoplasmic side. The segment at 200-246 (AERGKVSGKAGTVSKGPVLYATLDQSKSGKGASEKKSKLSESKRDKK) is disordered. Basic and acidic residues predominate over residues 231–246 (ASEKKSKLSESKRDKK).

This sequence belongs to the myelin P0 protein family. In terms of processing, N-glycan is sulfated. In terms of tissue distribution, found only in peripheral nervous system Schwann cells.

Its subcellular location is the cell membrane. Its function is as follows. Creation of an extracellular membrane face which guides the wrapping process and ultimately compacts adjacent lamellae. This is Myelin protein P0 (mpz) from Heterodontus francisci (Horn shark).